Consider the following 1104-residue polypeptide: Isoleucine--tRNA ligase (1104 aa).

The 'HIGH' region signature appears at Pro48 to Thr58. Positions Lys644 to Ser648 match the 'KMSKS' region motif. Residue Lys647 coordinates ATP.

It belongs to the class-I aminoacyl-tRNA synthetase family. IleS type 2 subfamily. As to quaternary structure, monomer. Zn(2+) is required as a cofactor.

It localises to the cytoplasm. It carries out the reaction tRNA(Ile) + L-isoleucine + ATP = L-isoleucyl-tRNA(Ile) + AMP + diphosphate. In terms of biological role, catalyzes the attachment of isoleucine to tRNA(Ile). As IleRS can inadvertently accommodate and process structurally similar amino acids such as valine, to avoid such errors it has two additional distinct tRNA(Ile)-dependent editing activities. One activity is designated as 'pretransfer' editing and involves the hydrolysis of activated Val-AMP. The other activity is designated 'posttransfer' editing and involves deacylation of mischarged Val-tRNA(Ile). The chain is Isoleucine--tRNA ligase from Methanocella arvoryzae (strain DSM 22066 / NBRC 105507 / MRE50).